A 359-amino-acid chain; its full sequence is Cytokine receptor-like factor 2 (359 aa).

Positions 1 to 19 (MAWALAVILLPRLLAAAAA) are cleaved as a signal peptide. Topologically, residues 20 to 232 (AAAVTSRGDV…PAPSPALAPP (213 aa)) are extracellular. An N-linked (GlcNAc...) asparagine glycan is attached at Asn-53. The cysteines at positions 68 and 82 are disulfide-linked. A Fibronectin type-III domain is found at 119–213 (PPWNVTLLWT…WTAVTRLSGA (95 aa)). Asn-122 carries N-linked (GlcNAc...) asparagine glycosylation. 2 cysteine pairs are disulfide-bonded: Cys-168–Cys-169 and Cys-181–Cys-219. Positions 201–205 (PSEWT) match the WSXWS motif motif. Residues 233-253 (LLPLGCGLAALLTLSLLLAAL) form a helical membrane-spanning segment. The Cytoplasmic portion of the chain corresponds to 254-359 (RLRRVKDALL…MVGDSGYMTL (106 aa)). The Box 1 motif signature appears at 262–270 (LLPCVPDPS). The tract at residues 312–336 (KRVEPEDGTSLCTVPRPPSFEPRGP) is disordered.

It belongs to the type I cytokine receptor family. Type 5 subfamily. As to quaternary structure, the TSLP receptor is a heterodimer of CRLF2 and IL7R. Binding of TSLP to CRLF2/TSLPR is a mechanistic prerequisite for recruitment of IL7R to the high-affinity ternary complex. In terms of tissue distribution, high level of expression in liver, lung and testis. Also expressed in heart, brain, spleen, thymus and bone marrow. Highly expressed in progenitors and myeloid cells. Isoform 2 is expressed in primary hemotopoietic cells.

Its subcellular location is the cell membrane. The protein localises to the secreted. In terms of biological role, receptor for thymic stromal lymphopoietin (TSLP). Forms a functional complex with TSLP and IL7R which is capable of stimulating cell proliferation through activation of STAT3 and STAT5. Also activates JAK2. Implicated in the development of the hematopoietic system. This chain is Cytokine receptor-like factor 2 (Crlf2), found in Mus musculus (Mouse).